The following is a 353-amino-acid chain: Photosystem II D2 protein (353 aa).

Thr2 is subject to N-acetylthreonine. Thr2 bears the Phosphothreonine mark. Residues 41–61 (CAYFALGGWFTGTTFVTSWYT) traverse the membrane as a helical segment. His118 is a binding site for chlorophyll a. Residues 125–141 (GFMLRQFELARSVQLRP) form a helical membrane-spanning segment. 2 residues coordinate pheophytin a: Gln130 and Asn143. A helical membrane pass occupies residues 153–166 (VFVSVFLIYPLGQS). A chlorophyll a-binding site is contributed by His198. Residues 208-228 (AALLCAIHGATVENTLFEDGD) traverse the membrane as a helical segment. Residues His215 and Phe262 each contribute to the a plastoquinone site. A Fe cation-binding site is contributed by His215. His269 contributes to the Fe cation binding site. The helical transmembrane segment at 279 to 295 (GLWMSAIGVVGLALNLR) threads the bilayer.

Belongs to the reaction center PufL/M/PsbA/D family. In terms of assembly, PSII is composed of 1 copy each of membrane proteins PsbA, PsbB, PsbC, PsbD, PsbE, PsbF, PsbH, PsbI, PsbJ, PsbK, PsbL, PsbM, PsbT, PsbX, PsbY, PsbZ, Psb30/Ycf12, at least 3 peripheral proteins of the oxygen-evolving complex and a large number of cofactors. It forms dimeric complexes. The D1/D2 heterodimer binds P680, chlorophylls that are the primary electron donor of PSII, and subsequent electron acceptors. It shares a non-heme iron and each subunit binds pheophytin, quinone, additional chlorophylls, carotenoids and lipids. There is also a Cl(-1) ion associated with D1 and D2, which is required for oxygen evolution. The PSII complex binds additional chlorophylls, carotenoids and specific lipids. serves as cofactor.

Its subcellular location is the plastid. It is found in the chloroplast thylakoid membrane. The enzyme catalyses 2 a plastoquinone + 4 hnu + 2 H2O = 2 a plastoquinol + O2. Functionally, photosystem II (PSII) is a light-driven water:plastoquinone oxidoreductase that uses light energy to abstract electrons from H(2)O, generating O(2) and a proton gradient subsequently used for ATP formation. It consists of a core antenna complex that captures photons, and an electron transfer chain that converts photonic excitation into a charge separation. The D1/D2 (PsbA/PsbD) reaction center heterodimer binds P680, the primary electron donor of PSII as well as several subsequent electron acceptors. D2 is needed for assembly of a stable PSII complex. The chain is Photosystem II D2 protein from Pinus thunbergii (Japanese black pine).